Here is a 114-residue protein sequence, read N- to C-terminus: NLP effector protein 1 (114 aa).

This sequence belongs to the Necrosis inducing protein (NPP1) family.

It localises to the secreted. Its subcellular location is the host cytoplasm. Its function is as follows. Probable secreted effector that may act as a pathogen-associated molecular pattern (PAMP) recognized by the plant immune system. Seems not to induce necrosis, neither in several susceptible or resistant Vitis species nor in the dicot model plant Nicotiana benthamiana. This chain is NLP effector protein 1, found in Plasmopara viticola (Downy mildew of grapevine).